The chain runs to 770 residues: Low-density lipoprotein receptor-related protein 3 (770 aa).

Positions 1-36 (MEKRAAAGPEGAPGARAPLAVVCLVNLFLTGRLSSA) are cleaved as a signal peptide. Residues 37–496 (VPALAACSGK…HGCLAAVPRK (460 aa)) lie on the Extracellular side of the membrane. 9 disulfides stabilise this stretch: Cys-43-Cys-72, Cys-99-Cys-120, Cys-166-Cys-178, Cys-173-Cys-191, Cys-185-Cys-200, Cys-212-Cys-227, Cys-219-Cys-240, Cys-234-Cys-249, and Cys-254-Cys-282. Positions 43–159 (CSGKLEQHTE…QGFRLSYIRG (117 aa)) constitute a CUB 1 domain. N-linked (GlcNAc...) asparagine glycosylation occurs at Asn-71. LDL-receptor class A domains follow at residues 165-201 (SCQT…GNCS) and 211-250 (LCPG…AGCP). Asn-199 carries N-linked (GlcNAc...) asparagine glycosylation. The region spanning 254–365 (CGRRLGSFYG…HGFNATYQVK (112 aa)) is the CUB 2 domain. Asn-359 carries N-linked (GlcNAc...) asparagine glycosylation. 2 consecutive LDL-receptor class A domains span residues 415-453 (ACPP…KNCF) and 454-490 (SCQP…HGCL). 6 disulfide bridges follow: Cys-416/Cys-430, Cys-423/Cys-443, Cys-437/Cys-452, Cys-455/Cys-467, Cys-462/Cys-480, and Cys-474/Cys-489. Residues 497–517 (VITAALIGSLVCGLLLVIALG) traverse the membrane as a helical segment. Topologically, residues 518-770 (CAFKLYSLRT…ASDDEALLVC (253 aa)) are cytoplasmic. Positions 639–753 (LLQAAPGPVP…PLGVCRSPPP (115 aa)) are disordered. Residues 689 to 703 (RDPEYRPEDKERKAC) show a composition bias toward basic and acidic residues.

This sequence belongs to the LDLR family. As to quaternary structure, binds GGA1 and GGA2.

It localises to the membrane. The protein localises to the coated pit. Its function is as follows. Probable receptor, which may be involved in the internalization of lipophilic molecules and/or signal transduction. Its precise role is however unclear, since it does not bind to very low density lipoprotein (VLDL) or to LRPAP1 in vitro. The chain is Low-density lipoprotein receptor-related protein 3 (Lrp3) from Rattus norvegicus (Rat).